The primary structure comprises 172 residues: Small ribosomal subunit protein uS5 (172 aa).

The region spanning 15 to 78 is the S5 DRBM domain; the sequence is LNDKLIFINR…ANAKRNLSRI (64 aa).

Belongs to the universal ribosomal protein uS5 family. In terms of assembly, part of the 30S ribosomal subunit. Contacts proteins S4 and S8.

With S4 and S12 plays an important role in translational accuracy. Functionally, located at the back of the 30S subunit body where it stabilizes the conformation of the head with respect to the body. The chain is Small ribosomal subunit protein uS5 from Dehalococcoides mccartyi (strain ATCC BAA-2266 / KCTC 15142 / 195) (Dehalococcoides ethenogenes (strain 195)).